A 235-amino-acid chain; its full sequence is AA9 family lytic polysaccharide monooxygenase D (235 aa).

The first 18 residues, 1–18 (MKAFFAVLAVVSAPFVLG), serve as a signal peptide directing secretion. Cu(2+) is bound at residue histidine 19. Residue serine 29 is glycosylated (O-linked (Man...) serine). Residues cysteine 61 and cysteine 181 are joined by a disulfide bond. Position 94 (histidine 94) interacts with Cu(2+). Residues histidine 167 and glutamine 176 each coordinate O2. A Cu(2+)-binding site is contributed by tyrosine 178. Asparagine 221 is a glycosylation site (N-linked (GlcNAc...) asparagine).

Belongs to the polysaccharide monooxygenase AA9 family. Cu(2+) is required as a cofactor.

It localises to the secreted. It catalyses the reaction [(1-&gt;4)-beta-D-glucosyl]n+m + reduced acceptor + O2 = 4-dehydro-beta-D-glucosyl-[(1-&gt;4)-beta-D-glucosyl]n-1 + [(1-&gt;4)-beta-D-glucosyl]m + acceptor + H2O.. Its function is as follows. Lytic polysaccharide monooxygenase (LPMO) that depolymerizes crystalline and amorphous polysaccharides via the oxidation of scissile alpha- or beta-(1-4)-glycosidic bonds, yielding only C1 oxidation products. Catalysis by LPMOs requires the reduction of the active-site copper from Cu(II) to Cu(I) by a reducing agent and H(2)O(2) or O(2) as a cosubstrate. The protein is AA9 family lytic polysaccharide monooxygenase D of Phanerodontia chrysosporium (White-rot fungus).